The sequence spans 142 residues: Heat shock protein HSP.16.4 (142 aa).

The sHSP domain maps to 27–142; that stretch reads NLFNDLKSNL…KEIKTSIPIE (116 aa).

Belongs to the small heat shock protein (HSP20) family.

Its subcellular location is the cytoplasm. The protein is Heat shock protein HSP.16.4 of Streptococcus thermophilus.